A 215-amino-acid polypeptide reads, in one-letter code: MKKLLYITVNSKPENLSASKTVGRAFVNRFLEKHSDFEIEELDLYKCHIPRLEYEYFEKRSCLVNEDAFNKLDKKQQEEVHKIVKLTDQFKEADVYVIAAPMWSMSFPAPLKEYIDCIVMDGKTVDIKDGEKPEGLLNDKPRGAVYIQSSGAKMNVLLKMVMDKGVHYIESIMKFMGIEKFEELLVDGTGTTEEEKNKAIEKAIENIDSVIDGIW.

17–19 (SAS) lines the FMN pocket.

This sequence belongs to the azoreductase type 1 family. Homodimer. It depends on FMN as a cofactor.

The enzyme catalyses 2 a quinone + NADH + H(+) = 2 a 1,4-benzosemiquinone + NAD(+). It carries out the reaction N,N-dimethyl-1,4-phenylenediamine + anthranilate + 2 NAD(+) = 2-(4-dimethylaminophenyl)diazenylbenzoate + 2 NADH + 2 H(+). Functionally, quinone reductase that provides resistance to thiol-specific stress caused by electrophilic quinones. In terms of biological role, also exhibits azoreductase activity. Catalyzes the reductive cleavage of the azo bond in aromatic azo compounds to the corresponding amines. This chain is FMN-dependent NADH:quinone oxidoreductase, found in Clostridium botulinum (strain Alaska E43 / Type E3).